A 452-amino-acid chain; its full sequence is Probable glycine dehydrogenase (decarboxylating) subunit 1 (452 aa).

The protein belongs to the GcvP family. N-terminal subunit subfamily. The glycine cleavage system is composed of four proteins: P, T, L and H. In this organism, the P 'protein' is a heterodimer of two subunits.

It carries out the reaction N(6)-[(R)-lipoyl]-L-lysyl-[glycine-cleavage complex H protein] + glycine + H(+) = N(6)-[(R)-S(8)-aminomethyldihydrolipoyl]-L-lysyl-[glycine-cleavage complex H protein] + CO2. The glycine cleavage system catalyzes the degradation of glycine. The P protein binds the alpha-amino group of glycine through its pyridoxal phosphate cofactor; CO(2) is released and the remaining methylamine moiety is then transferred to the lipoamide cofactor of the H protein. This is Probable glycine dehydrogenase (decarboxylating) subunit 1 from Sphingopyxis alaskensis (strain DSM 13593 / LMG 18877 / RB2256) (Sphingomonas alaskensis).